Reading from the N-terminus, the 518-residue chain is Flagellin (518 aa).

It belongs to the bacterial flagellin family.

The protein localises to the secreted. The protein resides in the bacterial flagellum. In terms of biological role, flagellin is the subunit protein which polymerizes to form the filaments of bacterial flagella. This is Flagellin (flaA) from Aquifex aeolicus (strain VF5).